A 161-amino-acid chain; its full sequence is Endoribonuclease YbeY (161 aa).

Zn(2+) contacts are provided by His-127, His-131, and His-137.

It belongs to the endoribonuclease YbeY family. Zn(2+) is required as a cofactor.

The protein localises to the cytoplasm. Its function is as follows. Single strand-specific metallo-endoribonuclease involved in late-stage 70S ribosome quality control and in maturation of the 3' terminus of the 16S rRNA. This Listeria innocua serovar 6a (strain ATCC BAA-680 / CLIP 11262) protein is Endoribonuclease YbeY.